The primary structure comprises 418 residues: Transcription termination factor Rho (418 aa).

In terms of domain architecture, Rho RNA-BD spans 48 to 123 (SIFGEGTLEV…VKVDKVNGEA (76 aa)). ATP is bound by residues 169–174 (GKGQRA), 181–186 (KSGKTV), and Arg212.

The protein belongs to the Rho family. Homohexamer. The homohexamer assembles into an open ring structure.

Functionally, facilitates transcription termination by a mechanism that involves Rho binding to the nascent RNA, activation of Rho's RNA-dependent ATPase activity, and release of the mRNA from the DNA template. This Chromobacterium violaceum (strain ATCC 12472 / DSM 30191 / JCM 1249 / CCUG 213 / NBRC 12614 / NCIMB 9131 / NCTC 9757 / MK) protein is Transcription termination factor Rho.